The chain runs to 129 residues: Acetophenone carboxylase beta subunit (129 aa).

As to quaternary structure, acetophenone carboxylase consists of five subunits; a heterooctameric subcomplex of two alpha (Apc1), two beta (Apc2), two gamma (Apc3) and two delta (Apc4) subunits assembles with the epsilon (Apc5) subunit in an unknown stoichiometry. Mg(2+) serves as cofactor. The cofactor is Mn(2+).

It is found in the cytoplasm. It catalyses the reaction acetophenone + hydrogencarbonate + 2 ATP + H2O = 3-oxo-3-phenylpropanoate + 2 ADP + 2 phosphate + 2 H(+). With respect to regulation, inhibited by zinc ions, carbamoylphosphate and beta,gamma-imido-ATP. In terms of biological role, catalyzes the carboxylation of acetophenone to form 3-oxo-3-phenylpropanoate (benzoylacetate) in the anaerobic catabolism of ethylbenzene. Also carboxylates propiophenone at the same rate and 4-acetyl-pyridine at lower rates. The polypeptide is Acetophenone carboxylase beta subunit (apc2) (Aromatoleum aromaticum (strain DSM 19018 / LMG 30748 / EbN1) (Azoarcus sp. (strain EbN1))).